We begin with the raw amino-acid sequence, 1032 residues long: Reticulon-3 (1032 aa).

The span at 1–24 (MAEPSAATQSHSISSSSFGAEPSA) shows a compositional bias: low complexity. The tract at residues 1–61 (MAEPSAATQS…SSSSSQPVSL (61 aa)) is disordered. An N-acetylalanine modification is found at alanine 2. Over 2 to 863 (AEPSAATQSH…KKTGFVFGTT (862 aa)) the chain is Cytoplasmic. Position 30 is a phosphoserine (serine 30). Over residues 32–61 (GACPALGTKSCSSSCADSFVSSSSSQPVSL) the composition is skewed to low complexity. Residues serine 229, serine 243, serine 246, serine 283, serine 316, and serine 453 each carry the phosphoserine modification. Residues 545–568 (CEREEKTSKNFEELVSDSELHQDQ) show a composition bias toward basic and acidic residues. The segment at 545-617 (CEREEKTSKN…NPKLPSTVSP (73 aa)) is disordered. Polar residues predominate over residues 605 to 617 (TTENPKLPSTVSP). Residues serine 649 and serine 650 each carry the phosphoserine modification. Residues 696–715 (NESGGSEIKDIGSKYSEQSK) show a composition bias toward basic and acidic residues. Residues 696-726 (NESGGSEIKDIGSKYSEQSKETNGSEPLGVF) form a disordered region. A Phosphoserine modification is found at serine 735. One can recognise a Reticulon domain in the interval 844 to 1032 (VHDLIFWRDV…LPGIAKKKAE (189 aa)). An intramembrane region (helical) is located at residues 864 to 887 (LIMLLSLAAFSVISVVSYLILALL). The Cytoplasmic segment spans residues 888–947 (SVTISFRIYKSVIQAVQKSEEGHPFKAYLDVDITLSSEAFHNYMNAAMVHINRALKLIIR). An intramembrane region (helical) is located at residues 948–968 (LFLVEDLVDSLKLAVFMWLMT). The Cytoplasmic segment spans residues 969–972 (YVGA). The segment at residues 973–993 (VFNGITLLILAELLIFSVPIV) is an intramembrane region (helical). The segment at 987 to 1032 (IFSVPIVYEKYKTQIDHYVGIARDQTKSIVEKIQAKLPGIAKKKAE) is interaction with FADD. Residues 994-1032 (YEKYKTQIDHYVGIARDQTKSIVEKIQAKLPGIAKKKAE) are Cytoplasmic-facing. The interval 1000–1002 (QID) is interaction with BACE1.

As to quaternary structure, homodimer. Interacts with ATL1. Interacts with RTN4. Isoform 3 interacts with BACE1, BACE2, BCL2 and FADD. Interacts with ATL2. Interacts with TMEM33. Interacts with ZFYVE27 and with KIF5A in a ZFYVE27-dependent manner. Interacts with RIGI. Interacts with TRIM25. In terms of assembly, (Microbial infection) Interacts with Coxsackievirus A16, enterovirus 71 and poliovirus P2C proteins. (Microbial infection) Interacts with West Nile virus protein NS4A. As to expression, isoform 3 is widely expressed, with highest levels in brain, where it is enriched in neuronal cell bodies from gray matter (at protein level). Three times more abundant in macula than in peripheral retina. Isoform 1 is expressed at high levels in brain and at low levels in skeletal muscle. Isoform 2 is only found in melanoma.

The protein resides in the endoplasmic reticulum membrane. The protein localises to the golgi apparatus membrane. May be involved in membrane trafficking in the early secretory pathway. Inhibits BACE1 activity and amyloid precursor protein processing. May induce caspase-8 cascade and apoptosis. May favor BCL2 translocation to the mitochondria upon endoplasmic reticulum stress. Induces the formation of endoplasmic reticulum tubules. Also acts as an inflammation-resolving regulator by interacting with both TRIM25 and RIGI, subsequently impairing RIGI 'Lys-63'-linked polyubiquitination leading to IRF3 and NF-kappa-B inhibition. Its function is as follows. (Microbial infection) Plays a positive role in viral replication and pathogenesis of enteroviruses. This chain is Reticulon-3 (RTN3), found in Homo sapiens (Human).